Here is an 84-residue protein sequence, read N- to C-terminus: Cell division topological specificity factor (84 aa).

The protein belongs to the MinE family.

Prevents the cell division inhibition by proteins MinC and MinD at internal division sites while permitting inhibition at polar sites. This ensures cell division at the proper site by restricting the formation of a division septum at the midpoint of the long axis of the cell. The chain is Cell division topological specificity factor from Pseudomonas fluorescens (strain SBW25).